Reading from the N-terminus, the 778-residue chain is Serine/threonine-protein kinase BRSK1 (778 aa).

Residues 1–12 (MSSGAKEGGGGS) show a composition bias toward gly residues. A disordered region spans residues 1–29 (MSSGAKEGGGGSPAYHLPHPHPHPPQHAQ). The Protein kinase domain maps to 34–285 (YRLEKTLGKG…LEQIQKHPWY (252 aa)). ATP is bound by residues 40 to 48 (LGKGQTGLV) and Lys-63. Asp-156 functions as the Proton acceptor in the catalytic mechanism. The residue at position 189 (Thr-189) is a Phosphothreonine; by LKB1. In terms of domain architecture, UBA spans 314 to 356 (ELDPDVLESMASLGCFRDRERLHRELRSEEENQEKMIYYLLLD). A compositionally biased stretch (basic and acidic residues) spans 362-383 (PSCEDQDLPPRNDVDPPRKRVD). Residues 362–548 (PSCEDQDLPP…SPGGGVGGAA (187 aa)) form a disordered region. Phosphoserine occurs at positions 399, 443, 447, and 450. Positions 430–457 (SRSVSGASTGLSSSPLSSPRSPVFSFSP) are enriched in low complexity. Omega-N-methylarginine is present on residues Arg-466, Arg-481, Arg-484, and Arg-498. Residues 491-508 (QPPPPSARSTPLPGPPGS) show a composition bias toward pro residues. Position 508 is a phosphoserine (Ser-508). The span at 509 to 533 (PRSSGGTPLHSPLHTPRASPTGTPG) shows a compositional bias: low complexity. Position 525 is an omega-N-methylarginine (Arg-525). Residues Thr-529 and Thr-535 each carry the phosphothreonine modification. Arg-550 bears the Omega-N-methylarginine mark. Thr-583 carries the post-translational modification Phosphothreonine. Phosphoserine occurs at positions 586, 587, and 601. The disordered stretch occupies residues 719–778 (QPSVQALADEKNGAQTRPAGAPPRSLQPPPGRPDPELSSSPRRGPPKDKKLLATNGTPLP).

Belongs to the protein kinase superfamily. CAMK Ser/Thr protein kinase family. SNF1 subfamily. The cofactor is Mg(2+). Phosphorylated at Thr-189 by STK11/LKB1 in complex with STE20-related adapter-alpha (STRADA) pseudo kinase and CAB39. Not phosphorylated at Thr-189 by CaMKK2. In contrast, it is phosphorylated and activated by CaMKK1. May be inactivated via dephosphorylation of Thr-189 by PP2C. In terms of tissue distribution, widely expressed, with highest levels in brain and testis. Protein levels remain constant throughout the cell cycle.

The protein localises to the cytoplasm. It is found in the nucleus. The protein resides in the cytoskeleton. It localises to the microtubule organizing center. Its subcellular location is the centrosome. The protein localises to the synapse. It is found in the presynaptic active zone. The protein resides in the cytoplasmic vesicle. It localises to the secretory vesicle. Its subcellular location is the synaptic vesicle. It catalyses the reaction L-seryl-[protein] + ATP = O-phospho-L-seryl-[protein] + ADP + H(+). The catalysed reaction is L-threonyl-[protein] + ATP = O-phospho-L-threonyl-[protein] + ADP + H(+). The enzyme catalyses L-seryl-[tau protein] + ATP = O-phospho-L-seryl-[tau protein] + ADP + H(+). It carries out the reaction L-threonyl-[tau protein] + ATP = O-phospho-L-threonyl-[tau protein] + ADP + H(+). Activated by phosphorylation on Thr-189 by STK11/LKB1. Serine/threonine-protein kinase that plays a key role in polarization of neurons and centrosome duplication. Phosphorylates CDC25B, CDC25C, MAPT/TAU, RIMS1, TUBG1, TUBG2 and WEE1. Following phosphorylation and activation by STK11/LKB1, acts as a key regulator of polarization of cortical neurons, probably by mediating phosphorylation of microtubule-associated proteins such as MAPT/TAU at 'Thr-529' and 'Ser-579'. Also regulates neuron polarization by mediating phosphorylation of WEE1 at 'Ser-642' in postmitotic neurons, leading to down-regulate WEE1 activity in polarized neurons. In neurons, localizes to synaptic vesicles and plays a role in neurotransmitter release, possibly by phosphorylating RIMS1. Also acts as a positive regulator of centrosome duplication by mediating phosphorylation of gamma-tubulin (TUBG1 and TUBG2) at 'Ser-131', leading to translocation of gamma-tubulin and its associated proteins to the centrosome. Involved in the UV-induced DNA damage checkpoint response, probably by inhibiting CDK1 activity through phosphorylation and activation of WEE1, and inhibition of CDC25B and CDC25C. The chain is Serine/threonine-protein kinase BRSK1 (BRSK1) from Homo sapiens (Human).